A 380-amino-acid polypeptide reads, in one-letter code: UDP-3-O-acylglucosamine N-acyltransferase (380 aa).

The active-site Proton acceptor is the His263.

The protein belongs to the transferase hexapeptide repeat family. LpxD subfamily. In terms of assembly, homotrimer.

It catalyses the reaction a UDP-3-O-[(3R)-3-hydroxyacyl]-alpha-D-glucosamine + a (3R)-hydroxyacyl-[ACP] = a UDP-2-N,3-O-bis[(3R)-3-hydroxyacyl]-alpha-D-glucosamine + holo-[ACP] + H(+). The protein operates within bacterial outer membrane biogenesis; LPS lipid A biosynthesis. Catalyzes the N-acylation of UDP-3-O-acylglucosamine using 3-hydroxyacyl-ACP as the acyl donor. Is involved in the biosynthesis of lipid A, a phosphorylated glycolipid that anchors the lipopolysaccharide to the outer membrane of the cell. The sequence is that of UDP-3-O-acylglucosamine N-acyltransferase from Rhodopirellula baltica (strain DSM 10527 / NCIMB 13988 / SH1).